The sequence spans 379 residues: tRNA(Met) cytidine acetate ligase (379 aa).

ATP is bound by residues 7 to 20 (ITEY…HQYH), G100, N153, and R178.

This sequence belongs to the TmcAL family.

Its subcellular location is the cytoplasm. The enzyme catalyses cytidine(34) in elongator tRNA(Met) + acetate + ATP = N(4)-acetylcytidine(34) in elongator tRNA(Met) + AMP + diphosphate. Catalyzes the formation of N(4)-acetylcytidine (ac(4)C) at the wobble position of elongator tRNA(Met), using acetate and ATP as substrates. First activates an acetate ion to form acetyladenylate (Ac-AMP) and then transfers the acetyl group to tRNA to form ac(4)C34. The chain is tRNA(Met) cytidine acetate ligase from Staphylococcus aureus (strain Mu3 / ATCC 700698).